We begin with the raw amino-acid sequence, 111 residues long: Carboxysome shell protein CcmK1 (111 aa).

The 87-residue stretch at 4–90 (AVGMIETLGF…PHENLEYVLP (87 aa)) folds into the BMC domain.

It belongs to the bacterial microcompartments protein family. CcmK subfamily. In terms of assembly, homohexamer. Interacts with full-length CcmM. Forms mixed heterohexamers of all possible stoichiometries with CcmK2, which might form dodecamers. Only very weak interactions with CcmK3 and CcmK4 were seen. Interacts with CcmN and CcmO in the carboxysome.

It localises to the carboxysome. In terms of biological role, one of the shell proteins of the carboxysome, a polyhedral inclusion where RuBisCO (ribulose bisphosphate carboxylase, rbcL-rbcS) is sequestered. Assembles into hexamers which make sheets that form the facets of the polyhedral carboxysome. The hexamer central pore probably regulates metabolite flux. Its function is as follows. Probably the major shell protein of the carboxysome, a polyhedral inclusion where RuBisCO (ribulose bisphosphate carboxylase, rbcL-rbcS) is sequestered. The central pore probably regulates metabolite flux. Hexamers make sheets that form the facets of the carboxysome. The sequence is that of Carboxysome shell protein CcmK1 from Synechocystis sp. (strain ATCC 27184 / PCC 6803 / Kazusa).